We begin with the raw amino-acid sequence, 206 residues long: 2,3-bisphosphoglycerate-dependent phosphoglycerate mutase (206 aa).

Substrate-binding positions include 9 to 16, 22 to 23, Arg61, 88 to 91, Lys99, 115 to 116, and 159 to 160; these read RHGQSEWN, TG, ERDY, RR, and GN. Residue His10 is the Tele-phosphohistidine intermediate of the active site. Glu88 serves as the catalytic Proton donor/acceptor.

Belongs to the phosphoglycerate mutase family. BPG-dependent PGAM subfamily. Homodimer.

The enzyme catalyses (2R)-2-phosphoglycerate = (2R)-3-phosphoglycerate. It participates in carbohydrate degradation; glycolysis; pyruvate from D-glyceraldehyde 3-phosphate: step 3/5. In terms of biological role, catalyzes the interconversion of 2-phosphoglycerate and 3-phosphoglycerate. The protein is 2,3-bisphosphoglycerate-dependent phosphoglycerate mutase of Bartonella bacilliformis (strain ATCC 35685 / KC583 / Herrer 020/F12,63).